A 248-amino-acid chain; its full sequence is tRNA (guanine-N(1)-)-methyltransferase (248 aa).

S-adenosyl-L-methionine contacts are provided by residues Gly113 and 133 to 138; that span reads IGDYVL.

The protein belongs to the RNA methyltransferase TrmD family. As to quaternary structure, homodimer.

It localises to the cytoplasm. It carries out the reaction guanosine(37) in tRNA + S-adenosyl-L-methionine = N(1)-methylguanosine(37) in tRNA + S-adenosyl-L-homocysteine + H(+). Specifically methylates guanosine-37 in various tRNAs. This is tRNA (guanine-N(1)-)-methyltransferase from Shewanella frigidimarina (strain NCIMB 400).